The chain runs to 235 residues: Large ribosomal subunit protein uL1 (235 aa).

Belongs to the universal ribosomal protein uL1 family. In terms of assembly, part of the 50S ribosomal subunit.

Binds directly to 23S rRNA. The L1 stalk is quite mobile in the ribosome, and is involved in E site tRNA release. In terms of biological role, protein L1 is also a translational repressor protein, it controls the translation of the L11 operon by binding to its mRNA. This chain is Large ribosomal subunit protein uL1, found in Synechococcus sp. (strain WH7803).